Consider the following 509-residue polypeptide: Lysine--tRNA ligase (509 aa).

Residues Glu-419 and Glu-426 each coordinate Mg(2+).

Belongs to the class-II aminoacyl-tRNA synthetase family. Homodimer. Mg(2+) serves as cofactor.

It localises to the cytoplasm. The enzyme catalyses tRNA(Lys) + L-lysine + ATP = L-lysyl-tRNA(Lys) + AMP + diphosphate. This Methylobacillus flagellatus (strain ATCC 51484 / DSM 6875 / VKM B-1610 / KT) protein is Lysine--tRNA ligase.